Consider the following 323-residue polypeptide: Ferrochelatase (323 aa).

Fe cation contacts are provided by His-196 and Glu-277.

Belongs to the ferrochelatase family.

Its subcellular location is the cytoplasm. It carries out the reaction heme b + 2 H(+) = protoporphyrin IX + Fe(2+). It participates in porphyrin-containing compound metabolism; protoheme biosynthesis; protoheme from protoporphyrin-IX: step 1/1. Functionally, catalyzes the ferrous insertion into protoporphyrin IX. The chain is Ferrochelatase from Haemophilus influenzae (strain ATCC 51907 / DSM 11121 / KW20 / Rd).